We begin with the raw amino-acid sequence, 170 residues long: ATP synthase subunit b (170 aa).

A helical membrane pass occupies residues 20 to 42 (QLLAMLVLLALLKKFALGPLLNI).

It belongs to the ATPase B chain family. F-type ATPases have 2 components, F(1) - the catalytic core - and F(0) - the membrane proton channel. F(1) has five subunits: alpha(3), beta(3), gamma(1), delta(1), epsilon(1). F(0) has three main subunits: a(1), b(2) and c(10-14). The alpha and beta chains form an alternating ring which encloses part of the gamma chain. F(1) is attached to F(0) by a central stalk formed by the gamma and epsilon chains, while a peripheral stalk is formed by the delta and b chains.

Its subcellular location is the cell membrane. In terms of biological role, f(1)F(0) ATP synthase produces ATP from ADP in the presence of a proton or sodium gradient. F-type ATPases consist of two structural domains, F(1) containing the extramembraneous catalytic core and F(0) containing the membrane proton channel, linked together by a central stalk and a peripheral stalk. During catalysis, ATP synthesis in the catalytic domain of F(1) is coupled via a rotary mechanism of the central stalk subunits to proton translocation. Component of the F(0) channel, it forms part of the peripheral stalk, linking F(1) to F(0). The sequence is that of ATP synthase subunit b from Bacillus velezensis (strain DSM 23117 / BGSC 10A6 / LMG 26770 / FZB42) (Bacillus amyloliquefaciens subsp. plantarum).